The sequence spans 147 residues: Hemoglobin subunit beta-1 (147 aa).

Val2 is subject to N-acetylvaline. Residues 3–147 enclose the Globin domain; the sequence is HLTGEEKAAV…VATALAHKYH (145 aa). The residue at position 18 (Lys18) is an N6-succinyllysine. A Phosphoserine modification is found at Ser45. Lys60 carries the N6-succinyllysine modification. The heme b site is built by His64 and His93. Arg105 carries the post-translational modification Asymmetric dimethylarginine. Position 124 is a phosphothreonine (Thr124).

Belongs to the globin family. In terms of assembly, hb1 is a heterotetramer of two alpha chains and two beta-1 chains. In terms of tissue distribution, red blood cells.

In terms of biological role, involved in oxygen transport from the lung to the various peripheral tissues. The sequence is that of Hemoglobin subunit beta-1 (HBB1) from Chalinolobus morio (Chocolate-wattled bat).